The chain runs to 397 residues: NADH-quinone oxidoreductase subunit H (397 aa).

9 helical membrane-spanning segments follow: residues 7–27, 78–98, 120–140, 164–184, 195–215, 247–267, 283–303, 322–342, and 353–373; these read ALLI…TAFA, LVYT…FGGI, ILAL…GGWA, MGLS…LDIV, WLIL…FAEV, MAEY…FFGG, SWPL…FIWV, LTLP…AFVP, and WLLG…SDAV.

The protein belongs to the complex I subunit 1 family. In terms of assembly, NDH-1 is composed of 15 different subunits. Subunits NuoA, H, J, K, L, M, N constitute the membrane sector of the complex.

Its subcellular location is the cell membrane. It catalyses the reaction a quinone + NADH + 5 H(+)(in) = a quinol + NAD(+) + 4 H(+)(out). NDH-1 shuttles electrons from NADH, via FMN and iron-sulfur (Fe-S) centers, to quinones in the respiratory chain. The immediate electron acceptor for the enzyme in this species is believed to be ubiquinone. Couples the redox reaction to proton translocation (for every two electrons transferred, four hydrogen ions are translocated across the cytoplasmic membrane), and thus conserves the redox energy in a proton gradient. This subunit may bind ubiquinone. In Deinococcus radiodurans (strain ATCC 13939 / DSM 20539 / JCM 16871 / CCUG 27074 / LMG 4051 / NBRC 15346 / NCIMB 9279 / VKM B-1422 / R1), this protein is NADH-quinone oxidoreductase subunit H.